Consider the following 602-residue polypeptide: Beta-(1--&gt;2)glucan export ATP-binding/permease protein NdvA (602 aa).

Residues 21 to 311 (GWTLAVANLL…VVSFVNSLMM (291 aa)) form the ABC transmembrane type-1 domain. 6 helical membrane-spanning segments follow: residues 22–42 (WTLA…PVLF), 68–88 (LLAA…TVAL), 146–166 (EHFA…YINW), 167–187 (RLAI…TLVV), 254–274 (VITR…GIAL), and 276–296 (QQGL…TLLI). An ABC transporter domain is found at 345-579 (VEFLDVSFSY…RGRFAELARA (235 aa)). An ATP-binding site is contributed by 378–385 (GATGAGKS).

Belongs to the ABC transporter superfamily. Beta-(1--&gt;2)glucan exporter (TC 3.A.1.108.1) family. As to quaternary structure, homodimer.

Its subcellular location is the cell inner membrane. The enzyme catalyses [(1-&gt;2)-beta-D-glucosyl](n)(in) + ATP + H2O = [(1-&gt;2)-beta-D-glucosyl](n)(out) + ADP + phosphate + H(+). In terms of biological role, involved in beta-(1--&gt;2)glucan export. Transmembrane domains (TMD) form a pore in the inner membrane and the ATP-binding domain (NBD) is responsible for energy generation. The sequence is that of Beta-(1--&gt;2)glucan export ATP-binding/permease protein NdvA from Rhodopseudomonas palustris (strain BisB5).